The following is a 333-amino-acid chain: MSDYLPVIGITMGDATGIGPEVIVKSLAHDSVRAQCRPLVIGDVRRLEVAGRLVGSPLKLRAIQAPEEARFQSGTIDCIDLGLIPEGLPFGKLSAVAGDAAFRYIERAVALTRDEKIDAICTAPLNKEALHAGGHKFPGHTEMLAYLTGTPEVSMMLVAPKLRVIHVTTHIGLLDAIRKIEPGLVQRTIERGHQTLQRAGIAAPRIGVCGINPHAGENGLFGHGEEEEKIIPAVEALRARGRDVEGPLPADTLFYRAGRGDFDLVVAMYHDQGHGPVKVLGLEAGVNITVGLPVIRTSVDHGTAFDIAGKGIADERSLLEALRQGAELATRRA.

The substrate site is built by histidine 140 and threonine 141. The a divalent metal cation site is built by histidine 170, histidine 214, and histidine 270. Residues lysine 278, asparagine 287, and arginine 296 each coordinate substrate.

The protein belongs to the PdxA family. PdxA2 subfamily. Homodimer. A divalent metal cation is required as a cofactor.

It catalyses the reaction 4-O-phospho-D-threonate + NAD(+) = dihydroxyacetone phosphate + CO2 + NADH. Its function is as follows. Catalyzes the NAD-dependent oxidation and subsequent decarboxylation of D-threonate 4-phosphate to produce dihydroxyacetone phosphate (DHAP). Can also use 4-hydroxy-L-threonine 4-phosphate as substrate. The polypeptide is D-threonate 4-phosphate dehydrogenase (Cupriavidus necator (strain ATCC 17699 / DSM 428 / KCTC 22496 / NCIMB 10442 / H16 / Stanier 337) (Ralstonia eutropha)).